Consider the following 340-residue polypeptide: NADPH dehydrogenase (340 aa).

Position 23–26 (23–26) interacts with FMN; that stretch reads SPMC. Residue Tyr-28 participates in substrate binding. Positions 60 and 102 each coordinate FMN. Residue 164-167 coordinates substrate; that stretch reads HGAH. FMN-binding positions include Arg-215 and 307 to 308; that span reads AR.

It belongs to the NADH:flavin oxidoreductase/NADH oxidase family. NamA subfamily. Homotetramer. FMN is required as a cofactor.

The enzyme catalyses A + NADPH + H(+) = AH2 + NADP(+). Functionally, catalyzes the reduction of the double bond of an array of alpha,beta-unsaturated aldehydes and ketones. It also reduces the nitro group of nitroester and nitroaromatic compounds. It could have a role in detoxification processes. This chain is NADPH dehydrogenase, found in Geobacillus sp. (strain WCH70).